The primary structure comprises 365 residues: tRNA 2-selenouridine synthase (365 aa).

The Rhodanese domain maps to Leu-15–Asp-138. Cys-98 (S-selanylcysteine intermediate) is an active-site residue.

Belongs to the SelU family. Monomer.

It catalyses the reaction 5-methylaminomethyl-2-thiouridine(34) in tRNA + selenophosphate + (2E)-geranyl diphosphate + H2O + H(+) = 5-methylaminomethyl-2-selenouridine(34) in tRNA + (2E)-thiogeraniol + phosphate + diphosphate. The catalysed reaction is 5-methylaminomethyl-2-thiouridine(34) in tRNA + (2E)-geranyl diphosphate = 5-methylaminomethyl-S-(2E)-geranyl-thiouridine(34) in tRNA + diphosphate. The enzyme catalyses 5-methylaminomethyl-S-(2E)-geranyl-thiouridine(34) in tRNA + selenophosphate + H(+) = 5-methylaminomethyl-2-(Se-phospho)selenouridine(34) in tRNA + (2E)-thiogeraniol. It carries out the reaction 5-methylaminomethyl-2-(Se-phospho)selenouridine(34) in tRNA + H2O = 5-methylaminomethyl-2-selenouridine(34) in tRNA + phosphate. Involved in the post-transcriptional modification of the uridine at the wobble position (U34) of tRNA(Lys), tRNA(Glu) and tRNA(Gln). Catalyzes the conversion of 2-thiouridine (S2U-RNA) to 2-selenouridine (Se2U-RNA). Acts in a two-step process involving geranylation of 2-thiouridine (S2U) to S-geranyl-2-thiouridine (geS2U) and subsequent selenation of the latter derivative to 2-selenouridine (Se2U) in the tRNA chain. In Shewanella piezotolerans (strain WP3 / JCM 13877), this protein is tRNA 2-selenouridine synthase.